The following is a 203-amino-acid chain: Urease accessory protein UreG (203 aa).

14–21 (GPVGSGKT) provides a ligand contact to GTP.

This sequence belongs to the SIMIBI class G3E GTPase family. UreG subfamily. As to quaternary structure, homodimer. UreD, UreF and UreG form a complex that acts as a GTP-hydrolysis-dependent molecular chaperone, activating the urease apoprotein by helping to assemble the nickel containing metallocenter of UreC. The UreE protein probably delivers the nickel.

The protein localises to the cytoplasm. Its function is as follows. Facilitates the functional incorporation of the urease nickel metallocenter. This process requires GTP hydrolysis, probably effectuated by UreG. The protein is Urease accessory protein UreG of Rhizobium etli (strain CIAT 652).